The sequence spans 267 residues: Cyclin-C (267 aa).

Positions 48-151 (IQVLGEQLKL…LLENLDCCLI (104 aa)) constitute a Cyclin N-terminal domain.

It belongs to the cyclin family. Cyclin C subfamily. As to quaternary structure, component of the Cdk8 module of the Mediator complex, composed of CycC, Cdk8, kto and skd.

The protein localises to the nucleus. Its function is as follows. Component of the Mediator complex, a coactivator involved in regulated gene transcription of nearly all RNA polymerase II-dependent genes. Mediator functions as a bridge to convey information from gene-specific regulatory proteins to the basal RNA polymerase II transcription machinery. Mediator is recruited to promoters by direct interactions with regulatory proteins and serves as a scaffold for the assembly of a functional preinitiation complex with RNA polymerase II and the general transcription factors. Binds to and activates cyclin-dependent kinase Cdk8 that phosphorylates the CTD (C-terminal domain) of the large subunit of RNA polymerase II (RNAp II), which may inhibit the formation of a transcription initiation complex. Required for leg and eye development and macrochaete specification or differentiation. The sequence is that of Cyclin-C (CycC) from Drosophila melanogaster (Fruit fly).